The sequence spans 104 residues: Large ribosomal subunit protein bL21 (104 aa).

The protein belongs to the bacterial ribosomal protein bL21 family. As to quaternary structure, part of the 50S ribosomal subunit. Contacts protein L20.

This protein binds to 23S rRNA in the presence of protein L20. The protein is Large ribosomal subunit protein bL21 of Elusimicrobium minutum (strain Pei191).